The sequence spans 516 residues: Lysophosphatidylcholine acyltransferase 2B (516 aa).

Asparagine 28 carries N-linked (GlcNAc...) asparagine glycosylation. The next 3 membrane-spanning stretches (helical) occupy residues 44 to 64 (THLSAWRWACTIILGTVLVPV), 68 to 88 (CIVFLLILLWPVAVLSAINLP), and 102 to 122 (LIKSALVFLFRLGFFFAGFLV). Positions 142–147 (HSTFFD) match the HXXXXD motif motif. EF-hand domains follow at residues 387 to 422 (PISEPLRQLFSLFDRNQDGTIDFREYVIGLTVLCNP) and 424 to 459 (NTEKILQMSFKLFDLDEDGYVTERELTTMLQAAFGV). The Ca(2+) site is built by aspartate 400, asparagine 402, aspartate 404, threonine 406, glutamate 411, aspartate 437, aspartate 439, aspartate 441, tyrosine 443, and glutamate 448.

Belongs to the 1-acyl-sn-glycerol-3-phosphate acyltransferase family.

The protein localises to the membrane. It participates in lipid metabolism; phospholipid metabolism. Probable acetyltransferase. The protein is Lysophosphatidylcholine acyltransferase 2B (Lpcat2b) of Mus musculus (Mouse).